The primary structure comprises 566 residues: Folate-like transporter DDB_G0272544 (566 aa).

The stretch at 24–81 (RNQDEDENENENNDNLENDNNKRNYISINNYEPYKEIDNNNNKNNNNNNIINNNNKIN) forms a coiled coil. The interval 25-46 (NQDEDENENENNDNLENDNNKR) is disordered. Residues 27-40 (DEDENENENNDNLE) are compositionally biased toward acidic residues. 11 helical membrane passes run 148–168 (VFLL…IIII), 171–191 (VAKI…WMIL), 194–214 (ITEG…YFSL), 226–246 (VNAG…LLVE), 252–272 (VYLL…ALGF), 304–324 (IWSG…QNLF), 332–352 (SWNG…AIIP), 364–384 (GIIL…MGFG), 388–408 (VVSA…SPIV), 420–440 (IGVL…LVQS), and 458–478 (YGAC…FLFL). The stretch at 517–544 (YNANIIDFENNNNNNNNNNNNNNNNNNN) forms a coiled coil. Low complexity predominate over residues 526–556 (NNNNNNNNNNNNNNNNNNNNNNNNNNNNNNN). The tract at residues 526–566 (NNNNNNNNNNNNNNNNNNNNNNNNNNNNNNNVGIGGNDNFK) is disordered.

The protein belongs to the reduced folate carrier (RFC) transporter (TC 2.A.48) family.

Its subcellular location is the membrane. Its function is as follows. Folate transporter. The sequence is that of Folate-like transporter DDB_G0272544 from Dictyostelium discoideum (Social amoeba).